A 77-amino-acid polypeptide reads, in one-letter code: Large ribosomal subunit protein bL28 (77 aa).

Belongs to the bacterial ribosomal protein bL28 family.

This Albidiferax ferrireducens (strain ATCC BAA-621 / DSM 15236 / T118) (Rhodoferax ferrireducens) protein is Large ribosomal subunit protein bL28.